A 258-amino-acid chain; its full sequence is Synapse differentiation-inducing gene protein 1 (258 aa).

Residues 1–181 (MDGIVEQKSV…NFLMMPPRDH (181 aa)) lie on the Cytoplasmic side of the membrane. Serine 137 carries the phosphoserine modification. Residues 182 to 202 (LGLSVFSMLCCFWPLGIAAFY) traverse the membrane as a helical segment. Topologically, residues 203-228 (LSHETNKAVAKGDFHQASTSSRRALF) are extracellular. An intramembrane region (helical) is located at residues 229–249 (LAVLSITIGTGIYVGVAVALI). Residues 250–258 (AYLSKNNHL) are Extracellular-facing.

The protein belongs to the CD225/Dispanin family. In terms of assembly, homodimer. Interacts with GRIA1 and GRIA2. In terms of tissue distribution, enriched in the cerebellum and also expressed in the neocortex and modestly in the hippocampus (at protein level). Expressed in hippocampal neurons, both in cell body and neurites, however its presence is enriched at excitatory synapses and also found in postsynaptic cells.

The protein localises to the cell membrane. It is found in the early endosome membrane. Its subcellular location is the postsynaptic density membrane. The protein resides in the synapse. It localises to the cell projection. The protein localises to the dendrite. It is found in the dendritic spine. Its function is as follows. May regulate AMPA receptor content at nascent synapses, and have a role in postsynaptic development and maturation. The polypeptide is Synapse differentiation-inducing gene protein 1 (Syndig1) (Rattus norvegicus (Rat)).